A 137-amino-acid chain; its full sequence is Large ribosomal subunit protein uL16 (137 aa).

The protein belongs to the universal ribosomal protein uL16 family. As to quaternary structure, part of the 50S ribosomal subunit.

Its function is as follows. Binds 23S rRNA and is also seen to make contacts with the A and possibly P site tRNAs. This Halorhodospira halophila (strain DSM 244 / SL1) (Ectothiorhodospira halophila (strain DSM 244 / SL1)) protein is Large ribosomal subunit protein uL16.